Consider the following 187-residue polypeptide: Dihydrofolate reductase 2, mitochondrial (187 aa).

In terms of domain architecture, DHFR spans Leu-4 to Lys-185. Residues Ala-10 and Gly-16–Asp-22 contribute to the NADP(+) site. Glu-31 to Gln-36 lines the substrate pocket. Arg-55 to Thr-57 is a binding site for NADP(+). Substrate is bound at residue Arg-71. Residues Ser-77 to Glu-79 and Gly-117 to Glu-124 contribute to the NADP(+) site.

This sequence belongs to the dihydrofolate reductase family. Expressed in numerous cell lines.

The protein resides in the mitochondrion. The protein localises to the mitochondrion matrix. Its subcellular location is the mitochondrion inner membrane. The catalysed reaction is (6S)-5,6,7,8-tetrahydrofolate + NADP(+) = 7,8-dihydrofolate + NADPH + H(+). Its pathway is cofactor biosynthesis; tetrahydrofolate biosynthesis; 5,6,7,8-tetrahydrofolate from 7,8-dihydrofolate: step 1/1. Its function is as follows. Key enzyme in folate metabolism. Contributes to the de novo mitochondrial thymidylate biosynthesis pathway. Required to prevent uracil accumulation in mtDNA. Binds its own mRNA and that of DHFR. This Homo sapiens (Human) protein is Dihydrofolate reductase 2, mitochondrial.